The primary structure comprises 146 residues: Large ribosomal subunit protein uL15 (146 aa).

Positions 1–10 (MRLNQLSPSA) are enriched in polar residues. Positions 1-54 (MRLNQLSPSAGSRPDAKRAGRGAGSGLGKTAGRGHKGQHSRSGGFHKVGFEGGQ) are disordered. The span at 21 to 31 (RGAGSGLGKTA) shows a compositional bias: gly residues.

This sequence belongs to the universal ribosomal protein uL15 family. As to quaternary structure, part of the 50S ribosomal subunit.

Binds to the 23S rRNA. This is Large ribosomal subunit protein uL15 from Halorhodospira halophila (strain DSM 244 / SL1) (Ectothiorhodospira halophila (strain DSM 244 / SL1)).